The following is a 782-amino-acid chain: uncharacterized protein (782 aa).

The zn(2)-C6 fungal-type DNA-binding region spans 22–50; the sequence is CRECHRLKLKCDRVWPCENCKKRGIPNLC. 2 disordered regions span residues 105–126 and 645–665; these read GEKP…DPDH and VPSS…AEKA. The segment covering 654–665 has biased composition (basic and acidic residues); it reads SPDDSSMRAEKA.

The protein localises to the nucleus. This is an uncharacterized protein from Schizosaccharomyces pombe (strain 972 / ATCC 24843) (Fission yeast).